A 231-amino-acid chain; its full sequence is Deoxyribose-phosphate aldolase (231 aa).

Catalysis depends on Asp-86, which acts as the Proton donor/acceptor. Lys-147 acts as the Schiff-base intermediate with acetaldehyde in catalysis. The active-site Proton donor/acceptor is Lys-172. The tract at residues 206-231 is disordered; sequence WQAETAGETVTEPESDRDGADTTDGY.

Belongs to the DeoC/FbaB aldolase family. DeoC type 1 subfamily.

It localises to the cytoplasm. It carries out the reaction 2-deoxy-D-ribose 5-phosphate = D-glyceraldehyde 3-phosphate + acetaldehyde. It participates in carbohydrate degradation; 2-deoxy-D-ribose 1-phosphate degradation; D-glyceraldehyde 3-phosphate and acetaldehyde from 2-deoxy-alpha-D-ribose 1-phosphate: step 2/2. In terms of biological role, catalyzes a reversible aldol reaction between acetaldehyde and D-glyceraldehyde 3-phosphate to generate 2-deoxy-D-ribose 5-phosphate. This chain is Deoxyribose-phosphate aldolase, found in Haloarcula marismortui (strain ATCC 43049 / DSM 3752 / JCM 8966 / VKM B-1809) (Halobacterium marismortui).